The chain runs to 874 residues: Collagen alpha-2(I) chain (874 aa).

The tract at residues 1-874 (SGGFDFSFLP…FGYEGDFYRA (874 aa)) is disordered. P10 and P13 each carry 4-hydroxyproline. The residue at position 16 (K16) is an Allysine. The segment covering 27-66 (LMGPRGPPGASGAPGPQGFQGPAGEPGEPGQTGPAGARGP) has biased composition (low complexity). 4-hydroxyproline is present on residues P34 and P40. The residue at position 93 (K93) is a 5-hydroxylysine; alternate. A glycan (O-linked (Gal...) hydroxylysine; alternate) is linked at K93. Low complexity-rich tracts occupy residues 110–143 (ARGRVGAPGPAGARGSDGSVGPVGPAGPIGSAGP), 188–209 (PGANGLTGAKGAAGLPGVAGAP), and 218–236 (PGPVGARGLVGEPGPAGSK). Residues 237-246 (GESGGKGEPG) are compositionally biased toward gly residues. Residues 247–257 (SAGPQGPPGSS) are compositionally biased toward low complexity. 4-hydroxyproline is present on residues P317 and P320. Low complexity-rich tracts occupy residues 346 to 365 (LPGIDGRPGPIGPAGARGEA), 434 to 451 (PGESGAVGPSGAIGSRGP), and 463 to 473 (EPGVVGAPGTA). Gly residues predominate over residues 474-483 (GPAGSGGLPG). Low complexity-rich tracts occupy residues 491–538 (RGEV…PRGS) and 545–565 (VGPAGPNGFAGPAGAAGQPGA). Residues 566–575 (KGERGTKGPK) show a composition bias toward basic and acidic residues. Over residues 583–593 (PTGPVGSAGPA) the composition is skewed to low complexity. Positions 603–612 (GSRGDGGPPG) are enriched in gly residues. A compositionally biased stretch (low complexity) spans 614-623 (TGFPGAAGRT). Over residues 648–662 (GPVGRGETGAGGPPG) the composition is skewed to gly residues. Composition is skewed to low complexity over residues 663-697 (FTGEKGPSGEPGTAGPPGTAGPQGLLGAPGILGLP) and 705-724 (LPGVAGAVGEPGPLGIAGPP). Residues 725 to 744 (GARGDGNPGSDGPPGRGAAG) are compositionally biased toward gly residues. Low complexity-rich tracts occupy residues 745–755 (APGPHGTVGPA) and 763–778 (EPGPVGSVGPVGALGP).

This sequence belongs to the fibrillar collagen family. In terms of assembly, trimers of one alpha 2(I) and two alpha 1(I) chains. Interacts (via C-terminus) with TMEM131 (via PapD-L domain); the interaction is direct and is involved in assembly and TRAPPIII ER-to-Golgi transport complex-dependent secretion of collagen. In terms of processing, prolines at the third position of the tripeptide repeating unit (G-X-Y) are hydroxylated in some or all of the chains. In terms of tissue distribution, expressed in bones.

The protein localises to the secreted. It localises to the extracellular space. It is found in the extracellular matrix. Functionally, type I collagen is a member of group I collagen (fibrillar forming collagen). This is Collagen alpha-2(I) chain from Megalonyx jeffersonii (Jefferson's ground sloth).